Reading from the N-terminus, the 227-residue chain is uncharacterized protein (227 aa).

A Response regulatory domain is found at 2–115; sequence KILMIEDNVS…TLVARIKAVI (114 aa). D51 bears the 4-aspartylphosphate mark. A DNA-binding region (ompR/PhoB-type) is located at residues 128–226; it reads EDMIETECFT…VWGVGYKFDE (99 aa).

Post-translationally, phosphorylated by YclK.

The protein resides in the cytoplasm. Could be member of the two-component regulatory system YclK/YclJ. This is an uncharacterized protein from Bacillus subtilis (strain 168).